A 144-amino-acid polypeptide reads, in one-letter code: Probable transcription termination protein NusA (144 aa).

The KH domain occupies 101 to 144 (RTDIVVGVKPEEIGKVIGKEGKNIKLFKDAVSRYFNVNSISVKQ).

Belongs to the NusA family.

The protein localises to the cytoplasm. Participates in transcription termination. The chain is Probable transcription termination protein NusA from Thermoplasma acidophilum (strain ATCC 25905 / DSM 1728 / JCM 9062 / NBRC 15155 / AMRC-C165).